The following is a 314-amino-acid chain: Protoheme IX farnesyltransferase (314 aa).

Helical transmembrane passes span 31–51 (VMSL…GHFH), 52–72 (PVLA…SGAL), 119–139 (ILVN…YVVI), 152–172 (IVIG…AVTG), 179–199 (LLLF…LALF), 225–245 (ILLY…LGYF), 247–267 (AVYG…AINV), and 284–304 (FAFS…EVVF).

This sequence belongs to the UbiA prenyltransferase family. Protoheme IX farnesyltransferase subfamily.

The protein resides in the cell inner membrane. The enzyme catalyses heme b + (2E,6E)-farnesyl diphosphate + H2O = Fe(II)-heme o + diphosphate. It participates in porphyrin-containing compound metabolism; heme O biosynthesis; heme O from protoheme: step 1/1. Converts heme B (protoheme IX) to heme O by substitution of the vinyl group on carbon 2 of heme B porphyrin ring with a hydroxyethyl farnesyl side group. The polypeptide is Protoheme IX farnesyltransferase (Bradyrhizobium diazoefficiens (strain JCM 10833 / BCRC 13528 / IAM 13628 / NBRC 14792 / USDA 110)).